A 402-amino-acid polypeptide reads, in one-letter code: MLASSRQPRHAFVEHHHQLSSSTLHRSGSPQTGTLRQDATTPTLATSVGPSMDRSASDYSQSGLPSPYPSNCGDNQSEAQSVTVDTSSAAQYNASAQQEVRSNNPGNYSASATPTSEYGVYPASARSSSFPDHLQQRSYHPASNHSGSSGDPSIAAPSPTYGAPAQYSPYGPPSQDMSHGYAHPGSNLYAQPRPDWSGYGQQHGAPLTPGHHVFPQTPTSAPPQARPNQVYSFVPIPGAQQHKRPRRRYEEIERMYKCGWQGCEKAYGTLNHLNAHVTMQSHGQKRTPEEFKEIRKEWKARKKEEEAARKADEERQRQAAQSQGGSTEGQAGSDVSQSSNGYAGARGAVQLPPIGYQAGQYPAATSTSVQQQPLPDYNASYMQGYQPASPYGGSNQAMYNQR.

The segment at 1-247 is disordered; that stretch reads MLASSRQPRH…GAQQHKRPRR (247 aa). 2 stretches are compositionally biased toward polar residues: residues 19-49 and 72-86; these read LSSSTLHRSGSPQTGTLRQDATTPTLATSVG and CGDNQSEAQSVTVDT. The segment covering 87–98 has biased composition (low complexity); it reads SSAAQYNASAQQ. Polar residues-rich tracts occupy residues 99-116 and 125-151; these read EVRSNNPGNYSASATPTS and ARSSSFPDHLQQRSYHPASNHSGSSGD. The C2H2-type zinc finger occupies 256 to 282; the sequence is YKCGWQGCEKAYGTLNHLNAHVTMQSH. A coiled-coil region spans residues 289–323; the sequence is EEFKEIRKEWKARKKEEEAARKADEERQRQAAQSQ. The segment covering 302-317 has biased composition (basic and acidic residues); sequence KKEEEAARKADEERQR. The interval 302–402 is disordered; it reads KKEEEAARKA…GSNQAMYNQR (101 aa). Polar residues-rich tracts occupy residues 322–341, 363–373, and 392–402; these read SQGGSTEGQAGSDVSQSSNG, AATSTSVQQQP, and GGSNQAMYNQR.

The protein resides in the nucleus. Its function is as follows. Transcription factor that plays a central role in appressorium formation and pathogenicity. Required for the expression of a large set of genes including factors that might play a role in membrane metabolism and ergosterol biosynthesis, the chitin-binding protein CBP1,as well as CHS7 that is essential for normal pathogenic development. The chain is C2H2 finger domain transcription factor CON7 from Pyricularia oryzae (strain 70-15 / ATCC MYA-4617 / FGSC 8958) (Rice blast fungus).